The sequence spans 55 residues: MVKLSKEAKQRLQQLFKGGQFAIRWGFIPLVIYLGFKRGADPGMPEPTVLSLLWG.

The Cytoplasmic segment spans residues 1 to 20 (MVKLSKEAKQRLQQLFKGGQ). Residues 21-36 (FAIRWGFIPLVIYLGF) form a helical membrane-spanning segment. Residues 37–55 (KRGADPGMPEPTVLSLLWG) lie on the Mitochondrial intermembrane side of the membrane.

The protein belongs to the Tom7 family. Forms part of the preprotein translocase complex of the outer mitochondrial membrane (TOM complex) which consists of at least 7 different proteins (TOMM5, TOMM6, TOMM7, TOMM20, TOMM22, TOMM40 and TOMM70).

It localises to the mitochondrion outer membrane. Its function is as follows. Required for assembly and stability of the TOM complex. Positive regulator of PRKN translocation to damaged mitochondria. Acts probably by stabilizing PINK1 on the outer membrane of depolarized mitochondria. This is Mitochondrial import receptor subunit TOM7 homolog (TOMM7) from Bos taurus (Bovine).